A 307-amino-acid chain; its full sequence is Dioxygenase cdmD (307 aa).

Fe cation-binding residues include His-146, Asp-148, and His-226.

This sequence belongs to the PhyH family. In terms of assembly, homodimer. Requires Fe cation as cofactor.

The enzyme catalyses verruculide A + 2-oxoglutarate + O2 = chrodrimanin T + succinate + CO2. It carries out the reaction chrodrimanin E + 2-oxoglutarate + O2 = chrodrimanin A + succinate + CO2. It participates in secondary metabolite biosynthesis; terpenoid biosynthesis. Functionally, dioxygenase; part of the gene cluster that mediates the biosynthesis of chrodrimanin B, a meroterpenoid that acts as a potent blocker of insect GABA-gated chloride channels. The first step of the pathway is the biosynthesis of 6-hydroxymellein by the polyketide synthase cdmE. The prenyltransferase cdmH acts as a 6-hydroxymellein 5-farnesyltransferase and produces the hydrophobic metabolite verruculide C. The FAD-dependent monooxygenase cdmI further converts verruculide C into verruculide B. The terpene cyclase cdmG then produced the pentacyclic molecule 3-hydroxypentacecilide A, the backbone structure of chrodrimanin B, via folding the farnesyl moiety of the substrate into the chair-boat conformation. The short-chain dehydrogenase/reductase cdmF functions as the 3-OH dehydrogenase that oxidizes the C-3 hydroxyl group of 3-hydroxypentacecilide A and produces chrodrimanin C, the dehydrogenated product of 3-hydroxypentacecilide A. The cytochrome P450 monooxygenase cdmJ then accepts both 3-hydroxypentacecilide A and chrodrimanin C and functions as a C-7-beta-hydroxylase to produce respectively chrodrimanin H and chrodrimanin F. The dioxygenase cdmA accepts chrodrimanin H to afford chrodrimanin E, which is further transformed to chrodrimanin A by the dioxygenase cdmD. CdmA can also accept chrodrimanin C as substrate to convert it into verruculide A, which is further converted into chrodrimanin T by cdmD. The last step of the biosynthesis is proposed to be performed by the acetyltransferase cdmC which acetylates chrodrimanin A to yield chrodrimanin B. The pathway may also lead to the production of additional shunt products, including chrodrimanins T and U. This chain is Dioxygenase cdmD, found in Talaromyces verruculosus (Penicillium verruculosum).